Reading from the N-terminus, the 106-residue chain is MAHAVRSKSNWCWQTYLLERINQVFSISLPPRAQPIGPVLAGAAFQTHSQQNNSGHQFGDRFHSKGHQDTEGRILWKEASTRTTDSTETADTQLVQRQGNGGICLS.

The interval 48 to 106 is disordered; it reads HSQQNNSGHQFGDRFHSKGHQDTEGRILWKEASTRTTDSTETADTQLVQRQGNGGICLS. Residues 58-80 are compositionally biased toward basic and acidic residues; it reads FGDRFHSKGHQDTEGRILWKEAS. A compositionally biased stretch (low complexity) spans 81–92; it reads TRTTDSTETADT.

As to expression, heart.

Its function is as follows. May be involved with the regulation of GNRH gene expression. It is not known if this protein is transcribed. This chain is Putative protein SH, found in Rattus norvegicus (Rat).